A 119-amino-acid chain; its full sequence is Small ribosomal subunit protein uS13 (119 aa).

Residues 90–119 form a disordered region; it reads IRHRRGLPLRGQRTRSNARTRKGKRKPIRS. Over residues 91–119 the composition is skewed to basic residues; sequence RHRRGLPLRGQRTRSNARTRKGKRKPIRS.

This sequence belongs to the universal ribosomal protein uS13 family. Part of the 30S ribosomal subunit. Forms a loose heterodimer with protein S19. Forms two bridges to the 50S subunit in the 70S ribosome.

Located at the top of the head of the 30S subunit, it contacts several helices of the 16S rRNA. In the 70S ribosome it contacts the 23S rRNA (bridge B1a) and protein L5 of the 50S subunit (bridge B1b), connecting the 2 subunits; these bridges are implicated in subunit movement. Contacts the tRNAs in the A and P-sites. This chain is Small ribosomal subunit protein uS13, found in Coxiella burnetii (strain CbuK_Q154) (Coxiella burnetii (strain Q154)).